Here is a 186-residue protein sequence, read N- to C-terminus: MGLSDLSKTPGQALGDMVQLGNVESVIQWGRSYSLWPYPFATACCGIEYMSTACSDYDIARFGAERPSFSPRQADMILVLGTITYKMAPVLRQIYDQMAEPKFVISVGACASSGGMFHTYGVLQGVDRILPVDVYVPGCPPRPEAILDALLKLQTKLKTQGLEARRQEVMQKIQELNERNKPLVVR.

Residues C44, C45, C110, and C139 each coordinate [4Fe-4S] cluster.

The protein belongs to the complex I 20 kDa subunit family. NDH-1 is composed of 14 different subunits. Subunits NuoB, C, D, E, F, and G constitute the peripheral sector of the complex. [4Fe-4S] cluster serves as cofactor.

The protein localises to the cell inner membrane. The enzyme catalyses a quinone + NADH + 5 H(+)(in) = a quinol + NAD(+) + 4 H(+)(out). NDH-1 shuttles electrons from NADH, via FMN and iron-sulfur (Fe-S) centers, to quinones in the respiratory chain. The immediate electron acceptor for the enzyme in this species is believed to be ubiquinone. Couples the redox reaction to proton translocation (for every two electrons transferred, four hydrogen ions are translocated across the cytoplasmic membrane), and thus conserves the redox energy in a proton gradient. In Leptospira interrogans serogroup Icterohaemorrhagiae serovar copenhageni (strain Fiocruz L1-130), this protein is NADH-quinone oxidoreductase subunit B.